Reading from the N-terminus, the 116-residue chain is NADH-ubiquinone oxidoreductase chain 3 (116 aa).

A run of 3 helical transmembrane segments spans residues 3–23 (LITTIITITITLSAVLATISF), 56–76 (FFLIAILFLLFDLEIALLLPL), and 87–107 (LTLIWSTAVLALLTLGLIYEW).

Belongs to the complex I subunit 3 family.

The protein resides in the mitochondrion membrane. It catalyses the reaction a ubiquinone + NADH + 5 H(+)(in) = a ubiquinol + NAD(+) + 4 H(+)(out). In terms of biological role, core subunit of the mitochondrial membrane respiratory chain NADH dehydrogenase (Complex I) that is believed to belong to the minimal assembly required for catalysis. Complex I functions in the transfer of electrons from NADH to the respiratory chain. The immediate electron acceptor for the enzyme is believed to be ubiquinone. In Oncorhynchus gorbuscha (Pink salmon), this protein is NADH-ubiquinone oxidoreductase chain 3 (MT-ND3).